The following is a 299-amino-acid chain: MKPDAAQVKTFLLQLQDNLCQQLSAVDGAPFIEDAWQREGGGGGRSRVLRDGNVFEQAGVNFSHVHGDAMPASATAHRPELAGRSFEAMGVSLVVHPLNPYVPTSHANVRFFIAEKPGADPVWWFGGGFDLTPYYGFEEDAIHWHRTARDLCLPFGEEVYPRYKKWCDDYFYLKHRQEQRGIGGLFFDDLNTPDFDHCFAFMQAVGNGYADAYLPIVERRKAMPYGERERHFQLYRRGRYVEFNLVWDRGTLFGLQTGGRTESILMSMPPLVRWEYDYQPEPGSPEAALSEFIQVRDWL.

Ser92 is a binding site for substrate. A divalent metal cation-binding residues include His96 and His106. The Proton donor role is filled by His106. 108 to 110 is a binding site for substrate; that stretch reads NVR. Residues His145 and His175 each coordinate a divalent metal cation. The segment at 240-275 is important for dimerization; that stretch reads YVEFNLVWDRGTLFGLQTGGRTESILMSMPPLVRWE. Position 258–260 (258–260) interacts with substrate; the sequence is GGR.

The protein belongs to the aerobic coproporphyrinogen-III oxidase family. In terms of assembly, homodimer. A divalent metal cation serves as cofactor.

The protein resides in the cytoplasm. The catalysed reaction is coproporphyrinogen III + O2 + 2 H(+) = protoporphyrinogen IX + 2 CO2 + 2 H2O. It participates in porphyrin-containing compound metabolism; protoporphyrin-IX biosynthesis; protoporphyrinogen-IX from coproporphyrinogen-III (O2 route): step 1/1. Its function is as follows. Involved in the heme biosynthesis. Catalyzes the aerobic oxidative decarboxylation of propionate groups of rings A and B of coproporphyrinogen-III to yield the vinyl groups in protoporphyrinogen-IX. The sequence is that of Oxygen-dependent coproporphyrinogen-III oxidase from Klebsiella pneumoniae (strain 342).